The sequence spans 392 residues: Protein Wnt-1 (392 aa).

The first 16 residues, 1–16 (MKCLWLLVITVLCLRC), serve as a signal peptide directing secretion. Intrachain disulfides connect Cys-89–Cys-100, Cys-142–Cys-150, Cys-152–Cys-179, Cys-227–Cys-241, Cys-229–Cys-236, Cys-321–Cys-352, Cys-337–Cys-347, Cys-351–Cys-391, Cys-367–Cys-382, Cys-369–Cys-379, and Cys-374–Cys-375. The N-linked (GlcNAc...) asparagine glycan is linked to Asn-99. A lipid anchor (O-palmitoleoyl serine; by PORCN) is attached at Ser-233. 2 N-linked (GlcNAc...) asparagine glycosylation sites follow: Asn-338 and Asn-368.

Belongs to the Wnt family. Palmitoleoylated by porcupine. The lipid group functions as a sorting signal, targeting the ligand to polarized vesicles that transport WNT-1 to unique sites at the cell surface. Depalmitoleoylated by notum, leading to inhibit Wnt signaling pathway.

The protein resides in the secreted. It localises to the extracellular space. Its subcellular location is the extracellular matrix. Its function is as follows. Ligand for members of the frizzled family of seven transmembrane receptors. Probable developmental protein. The sequence is that of Protein Wnt-1 (WNT-1) from Bombyx mori (Silk moth).